A 312-amino-acid chain; its full sequence is Pyridoxal kinase (312 aa).

Position 1 is an N-acetylmethionine (Met1). Positions 12 and 47 each coordinate pyridoxal. Residue Thr47 participates in pyridoxal 5'-phosphate binding. Ser59 is modified (phosphoserine). Residue Asp113 participates in ATP binding. A Na(+)-binding site is contributed by Asp113. Residue Asp118 participates in Mg(2+) binding. Thr148 contributes to the Na(+) binding site. Residues 150 to 153 (NQFE) and 186 to 187 (TS) contribute to the ATP site. Residue Thr186 participates in Na(+) binding. At Ser213 the chain carries Phosphoserine. ATP is bound by residues 226 to 228 (VDA) and Thr233. 234–235 (GD) is a binding site for pyridoxal 5'-phosphate. The active-site Proton acceptor is Asp235. Ser285 carries the phosphoserine modification.

It belongs to the pyridoxine kinase family. Homodimer. Zn(2+) serves as cofactor. Mg(2+) is required as a cofactor.

Its subcellular location is the cytoplasm. The protein localises to the cytosol. The enzyme catalyses pyridoxal + ATP = pyridoxal 5'-phosphate + ADP + H(+). The catalysed reaction is pyridoxamine + ATP = pyridoxamine 5'-phosphate + ADP + H(+). It carries out the reaction pyridoxine + ATP = pyridoxine 5'-phosphate + ADP + H(+). The protein operates within cofactor metabolism; pyridoxal 5'-phosphate salvage; pyridoxal 5'-phosphate from pyridoxal: step 1/1. It functions in the pathway cofactor metabolism; pyridoxal 5'-phosphate salvage; pyridoxine 5'-phosphate from pyridoxine: step 1/1. It participates in cofactor metabolism; pyridoxal 5'-phosphate salvage; pyridoxamine 5'-phosphate from pyridoxamine: step 1/1. With respect to regulation, activity is increased in the presence of K(+)or Na(+). In terms of biological role, catalyzes the phosphorylation of the dietary vitamin B6 vitamers pyridoxal (PL), pyridoxine (PN) and pyridoxamine (PM) to form pyridoxal 5'-phosphate (PLP), pyridoxine 5'-phosphate (PNP) and pyridoxamine 5'-phosphate (PMP), respectively. PLP is the active form of vitamin B6, and acts as a cofactor for over 140 different enzymatic reactions. In Bos taurus (Bovine), this protein is Pyridoxal kinase (PDXK).